Reading from the N-terminus, the 151-residue chain is Ribonuclease H (151 aa).

One can recognise an RNase H type-1 domain in the interval 2–143 (SSNVIEIYAD…ADALANKGVD (142 aa)). Residues aspartate 11, glutamate 49, aspartate 71, and aspartate 135 each contribute to the Mg(2+) site.

This sequence belongs to the RNase H family. Monomer. Mg(2+) serves as cofactor.

The protein resides in the cytoplasm. The catalysed reaction is Endonucleolytic cleavage to 5'-phosphomonoester.. Its function is as follows. Endonuclease that specifically degrades the RNA of RNA-DNA hybrids. The polypeptide is Ribonuclease H (Methylobacillus flagellatus (strain ATCC 51484 / DSM 6875 / VKM B-1610 / KT)).